The primary structure comprises 248 residues: MTEGAKSTIDQGEVDRFSAMAAEWWSPTGKFKPLHKFNPVRLAYIRDKACENFSRDPKSARPLEGLRVLDIGCGGGLLSEPVARMGASVVGADPSEKNIGIASTHAKASGVSVDYRAVTAEGLAEAGETFDIVLNMEVVEHVADVEFFMTTCAKMVRPGGLIFVATINRTMKAAALAIFAAENILRWLPRGTHQYEKLVRPEELEEPLVASGLEITDRTGVSFNPLSNQWNLSKDMDVNYMLLAKRPT.

4 residues coordinate S-adenosyl-L-methionine: arginine 41, glycine 72, aspartate 93, and methionine 136.

The protein belongs to the methyltransferase superfamily. UbiG/COQ3 family.

It catalyses the reaction a 3-demethylubiquinol + S-adenosyl-L-methionine = a ubiquinol + S-adenosyl-L-homocysteine + H(+). The enzyme catalyses a 3-(all-trans-polyprenyl)benzene-1,2-diol + S-adenosyl-L-methionine = a 2-methoxy-6-(all-trans-polyprenyl)phenol + S-adenosyl-L-homocysteine + H(+). It functions in the pathway cofactor biosynthesis; ubiquinone biosynthesis. O-methyltransferase that catalyzes the 2 O-methylation steps in the ubiquinone biosynthetic pathway. The polypeptide is Ubiquinone biosynthesis O-methyltransferase (Rhizobium johnstonii (strain DSM 114642 / LMG 32736 / 3841) (Rhizobium leguminosarum bv. viciae)).